Here is a 249-residue protein sequence, read N- to C-terminus: MERLIKLAEQIKDEELRKKVIEFLKNPKATHPGIVDTGISVEEAPASINWHHRYEGGLIEHTISVTKIALKMADVLEEVYGVEVNRDYIIAGALLHDIMKPYNYIRKEDGTFDHYDMFNLDHLTLAVAELYKRDFPIEVIKIVASHHGDHSPTRPNSIEAYIVHYADEADSKINDVAVRVCQARSRDLGISEQEIYKAVNPLKVYEVRSREGKLKTIEFLKDILKSIGIISEDEKKDENNESLENKESN.

Residues 58 to 172 (LIEHTISVTK…VHYADEADSK (115 aa)) enclose the HD domain.

In terms of assembly, homododecamer. It depends on Fe(2+) as a cofactor. Zn(2+) serves as cofactor.

It carries out the reaction 7,8-dihydroneopterin 2',3'-cyclic phosphate + H2O = 7,8-dihydroneopterin 3'-phosphate + H(+). The enzyme catalyses 7,8-dihydroneopterin 2',3'-cyclic phosphate + H2O = 7,8-dihydroneopterin 2'-phosphate + H(+). Its pathway is cofactor biosynthesis; 5,6,7,8-tetrahydromethanopterin biosynthesis. Its function is as follows. Cyclic phosphodiesterase that hydrolyzes the cyclic phosphate of 7,8-dihydroneopterin 2',3'-cyclic phosphate (H2N-cP) and converts it to a mixture of 7,8-dihydroneopterin 2'-phosphate (H2N-2'P) and 7,8-dihydroneopterin 3'-phosphate (H2N-3'P). Is also able to utilize other phosphodiesters as substrates in vitro: hydrolysis of bis-pNPP and pNPPC produces nitrophenyl phosphate, and that of 2',3'-cAMP produces 3'-AMP. ATP, 3',5'-cAMP, GTP, 3',5'-cGMP, and 4',5'-cFMN cannot serve as substrates. In Methanocaldococcus jannaschii (strain ATCC 43067 / DSM 2661 / JAL-1 / JCM 10045 / NBRC 100440) (Methanococcus jannaschii), this protein is Dihydroneopterin 2',3'-cyclic phosphate phosphodiesterase (mptB).